Consider the following 284-residue polypeptide: MPRYDDRYGNTRLYVGRLSSRTRTRDLERLFSRYGRVRDVDMKRDYAFVEFSDPRDADDARYYLDGRDFDGSRITVEASRGAPRGSRDNGSRGPPPGSGRCFNCGVDGHWARDCTAGDWKNKCYRCGERGHIERNCKNSPSPKKARQGGSYSRSPVKSRSPRRRRSPSRSRSYSRGRSYSRSRSPVRREKSVEDRSRSPKAMERSVSPKGRDQSLSPDRKVIDASPKRGSDYDGSPKENGNGRNSASPIVGGGESPVGLNGQDRSPIDDEAELSRPSPKGSESP.

The region spanning 11–81 is the RRM domain; it reads TRLYVGRLSS…SRITVEASRG (71 aa). The segment at 74–97 is disordered; sequence ITVEASRGAPRGSRDNGSRGPPPG. 2 CCHC-type zinc fingers span residues 99–116 and 121–138; these read GRCF…DCTA and NKCY…NCKN. The interval 132–284 is disordered; that stretch reads IERNCKNSPS…RPSPKGSESP (153 aa). Basic residues predominate over residues 159 to 180; that stretch reads RSPRRRRSPSRSRSYSRGRSYS. A phosphoserine mark is found at S166, S168, and S184. Positions 186 to 203 are enriched in basic and acidic residues; sequence VRREKSVEDRSRSPKAME. A phosphoserine mark is found at S205, S207, S214, S216, S225, S235, S255, S265, S277, and S281. Residues 209-236 are compositionally biased toward basic and acidic residues; the sequence is KGRDQSLSPDRKVIDASPKRGSDYDGSP.

This sequence belongs to the splicing factor SR family. RS2Z subfamily. As to quaternary structure, component of the spliceosome. In terms of processing, extensively phosphorylated on serine residues in the RS domain.

It is found in the nucleus. Functionally, probably involved in intron recognition and spliceosome assembly. The sequence is that of Serine/arginine-rich splicing factor RS2Z32 (RS2Z32) from Arabidopsis thaliana (Mouse-ear cress).